A 446-amino-acid polypeptide reads, in one-letter code: Ribosome biogenesis protein WDR12 homolog (446 aa).

The segment at 21–105 (VQITFFSKDK…ETILKIECII (85 aa)) is ubiquitin-like (UBL) domain. WD repeat units follow at residues 171–211 (KCSG…LVEK) and 216–255 (GHERAVECVSVNSDATRAISGSVDTNLKVWNLDPSDEATI). Positions 256–275 (YEKEEEESSAKKKRKKDTRT) are disordered. 4 WD repeats span residues 284-324 (GHRD…EVSR), 326-365 (KGPKSFTSIDIHPTSNLLISSCTDAIPRLYDPKNRDGAMV), 371-412 (GHQN…SSLF), and 416-446 (GHEDRILCAAWNEGLIATGSADCSIKIFETS).

It belongs to the WD repeat WDR12/YTM1 family.

It is found in the nucleus. The protein localises to the nucleolus. The protein resides in the nucleoplasm. In terms of biological role, required for maturation of ribosomal RNAs and formation of the large ribosomal subunit. This chain is Ribosome biogenesis protein WDR12 homolog, found in Caenorhabditis briggsae.